The following is a 340-amino-acid chain: Ketol-acid reductoisomerase (NADP(+)) (340 aa).

The KARI N-terminal Rossmann domain maps to 3–183 (VNIYYDKDCD…GGGRTGIIET (181 aa)). NADP(+) contacts are provided by residues 26 to 29 (FGSQ), Ser-54, and 84 to 87 (DELQ). The active site involves His-109. Gly-135 provides a ligand contact to NADP(+). The region spanning 184–329 (TFKDETETDL…KKLRAMMPWI (146 aa)) is the KARI C-terminal knotted domain. Residues Asp-192, Glu-196, Glu-228, and Glu-232 each coordinate Mg(2+). Residue Ser-253 coordinates substrate.

Belongs to the ketol-acid reductoisomerase family. Requires Mg(2+) as cofactor.

The catalysed reaction is (2R)-2,3-dihydroxy-3-methylbutanoate + NADP(+) = (2S)-2-acetolactate + NADPH + H(+). It carries out the reaction (2R,3R)-2,3-dihydroxy-3-methylpentanoate + NADP(+) = (S)-2-ethyl-2-hydroxy-3-oxobutanoate + NADPH + H(+). Its pathway is amino-acid biosynthesis; L-isoleucine biosynthesis; L-isoleucine from 2-oxobutanoate: step 2/4. It participates in amino-acid biosynthesis; L-valine biosynthesis; L-valine from pyruvate: step 2/4. Its function is as follows. Involved in the biosynthesis of branched-chain amino acids (BCAA). Catalyzes an alkyl-migration followed by a ketol-acid reduction of (S)-2-acetolactate (S2AL) to yield (R)-2,3-dihydroxy-isovalerate. In the isomerase reaction, S2AL is rearranged via a Mg-dependent methyl migration to produce 3-hydroxy-3-methyl-2-ketobutyrate (HMKB). In the reductase reaction, this 2-ketoacid undergoes a metal-dependent reduction by NADPH to yield (R)-2,3-dihydroxy-isovalerate. The sequence is that of Ketol-acid reductoisomerase (NADP(+)) from Campylobacter curvus (strain 525.92).